Here is a 344-residue protein sequence, read N- to C-terminus: Sensor histidine kinase GraS (344 aa).

The next 2 helical transmembrane spans lie at 18-38 (IFWI…DYDI) and 43-63 (IGFI…FTFL). One can recognise a Histidine kinase domain in the interval 126–332 (EFVHDIKTPV…TFVLTFPKQN (207 aa)). Histidine 129 carries the post-translational modification Phosphohistidine; by autocatalysis.

Autophosphorylated.

The protein localises to the cell membrane. The catalysed reaction is ATP + protein L-histidine = ADP + protein N-phospho-L-histidine.. Functionally, member of the two-component regulatory system GraR/GraS involved in resistance against cationic antimicrobial peptides (CAMPs). GraS probably functions as a sensor protein kinase which is autophosphorylated at a histidine residue and transfers its phosphate group to GraR. This is Sensor histidine kinase GraS (graS) from Staphylococcus haemolyticus (strain JCSC1435).